A 101-amino-acid polypeptide reads, in one-letter code: UPF0213 protein VC_A0739 (101 aa).

One can recognise a GIY-YIG domain in the interval 9-85 (SPWFVYLVRC…KALSKSQKEA (77 aa)).

It belongs to the UPF0213 family.

This is UPF0213 protein VC_A0739 from Vibrio cholerae serotype O1 (strain ATCC 39315 / El Tor Inaba N16961).